The following is a 100-amino-acid chain: Urease subunit gamma (100 aa).

The protein belongs to the urease gamma subunit family. As to quaternary structure, heterotrimer of UreA (gamma), UreB (beta) and UreC (alpha) subunits. Three heterotrimers associate to form the active enzyme.

The protein localises to the cytoplasm. The catalysed reaction is urea + 2 H2O + H(+) = hydrogencarbonate + 2 NH4(+). The protein operates within nitrogen metabolism; urea degradation; CO(2) and NH(3) from urea (urease route): step 1/1. This is Urease subunit gamma from Flavobacterium johnsoniae (strain ATCC 17061 / DSM 2064 / JCM 8514 / BCRC 14874 / CCUG 350202 / NBRC 14942 / NCIMB 11054 / UW101) (Cytophaga johnsonae).